A 296-amino-acid chain; its full sequence is Magnetosome protein MamB (296 aa).

Residues 1 to 12 (MKFENCRDCREE) are Cytoplasmic-facing. The interval 1–214 (MKFENCRDCR…GLMDSSVDTE (214 aa)) is transmembrane domain (TMD). A helical membrane pass occupies residues 13–33 (VVWWAFTADICMTLFKGVLGL). Residues 34 to 83 (MSGSVALVADSLHSGADVVASGVTQLSLKISNKPADERYPFGYGNIQYIS) are Lumenal-facing. Residues 84–104 (SSIVGSLLLIGASFLMYGSVM) traverse the membrane as a helical segment. The Cytoplasmic segment spans residues 105–112 (KLISGTYE). The helical transmembrane segment at 113–133 (APSIFAAVGASVTVIVNELMY) threads the bilayer. At 134–164 (RYQICVGNENNSPAIIANAWDNRSDAISSAA) the chain is on the lumenal side. A helical membrane pass occupies residues 165–185 (VMVGVIASVIGFPIADTIAAI). Residues 186–296 (GVSALVGRIG…SPAPAAAARA (111 aa)) are Cytoplasmic-facing. Residues 215–296 (LLQTAWQVAM…SPAPAAAARA (82 aa)) are C-terminal domain (CTD).

The protein belongs to the cation diffusion facilitator (CDF) transporter (TC 2.A.4) family. As to quaternary structure, forms heterodimers with MamM. Probably interacts with MamE.

The protein localises to the magnetosome membrane. In terms of biological role, plays a dual, essential role in magnetosome formation; required for magnetosome vesicle formation as well as biomineralization. Probably binds and transports iron. Requires heterodimerization with MamM for stability. The polypeptide is Magnetosome protein MamB (mamB) (Paramagnetospirillum magneticum (strain ATCC 700264 / AMB-1) (Magnetospirillum magneticum)).